The primary structure comprises 479 residues: Galactosylgalactosylxylosylprotein 3-beta-glucuronosyltransferase P (479 aa).

Residues 1–34 (MKGGNYTSLGTCSGINVSGNVAGTRKMSLGKSIK) lie on the Cytoplasmic side of the membrane. The helical; Signal-anchor for type II membrane protein transmembrane segment at 35 to 50 (MYLTIFILTTCIYMAL) threads the bilayer. At 51–479 (YQYHISREPF…EHIDRLLVRP (429 aa)) the chain is on the lumenal side. N-linked (GlcNAc...) asparagine glycosylation is found at Asn90, Asn97, Asn98, and Asn271. The segment covering 94–120 (NTNNNSTTTSTTTTTAPTTPTTTTTTT) has biased composition (low complexity). The tract at residues 94-122 (NTNNNSTTTSTTTTTAPTTPTTTTTTTVG) is disordered. Mn(2+) is bound at residue Asp335. Glu418 functions as the Proton acceptor in the catalytic mechanism. N-linked (GlcNAc...) asparagine glycosylation occurs at Asn460.

The protein belongs to the glycosyltransferase 43 family. Requires Mn(2+) as cofactor.

Its subcellular location is the golgi apparatus membrane. The catalysed reaction is 3-O-(beta-D-galactosyl-(1-&gt;3)-beta-D-galactosyl-(1-&gt;4)-beta-D-xylosyl)-L-seryl-[protein] + UDP-alpha-D-glucuronate = 3-O-(beta-D-GlcA-(1-&gt;3)-beta-D-Gal-(1-&gt;3)-beta-D-Gal-(1-&gt;4)-beta-D-Xyl)-L-seryl-[protein] + UDP + H(+). It participates in protein modification; protein glycosylation. Functionally, involved in the biosynthesis of L2/HNK-1 carbohydrate epitope on both glycolipids and glycoproteins. Enzyme has a broad specificity. The polypeptide is Galactosylgalactosylxylosylprotein 3-beta-glucuronosyltransferase P (GlcAT-P) (Drosophila melanogaster (Fruit fly)).